A 238-amino-acid polypeptide reads, in one-letter code: Probable transcriptional regulatory protein SPH_2064 (238 aa).

Belongs to the TACO1 family. YeeN subfamily.

The protein localises to the cytoplasm. The protein is Probable transcriptional regulatory protein SPH_2064 of Streptococcus pneumoniae (strain Hungary19A-6).